We begin with the raw amino-acid sequence, 959 residues long: Glycine dehydrogenase (decarboxylating) (959 aa).

Lys-704 carries the N6-(pyridoxal phosphate)lysine modification.

Belongs to the GcvP family. In terms of assembly, the glycine cleavage system is composed of four proteins: P, T, L and H. Pyridoxal 5'-phosphate serves as cofactor.

The enzyme catalyses N(6)-[(R)-lipoyl]-L-lysyl-[glycine-cleavage complex H protein] + glycine + H(+) = N(6)-[(R)-S(8)-aminomethyldihydrolipoyl]-L-lysyl-[glycine-cleavage complex H protein] + CO2. Its function is as follows. The glycine cleavage system catalyzes the degradation of glycine. The P protein binds the alpha-amino group of glycine through its pyridoxal phosphate cofactor; CO(2) is released and the remaining methylamine moiety is then transferred to the lipoamide cofactor of the H protein. In Parasynechococcus marenigrum (strain WH8102), this protein is Glycine dehydrogenase (decarboxylating).